The chain runs to 342 residues: Fructose-1,6-bisphosphatase class 1 (342 aa).

Glu-91, Asp-113, Leu-115, and Asp-116 together coordinate Mg(2+). Residues 116-119 (DGSS), Asn-211, and Lys-277 each bind substrate. Glu-283 contacts Mg(2+).

The protein belongs to the FBPase class 1 family. As to quaternary structure, homotetramer. The cofactor is Mg(2+).

Its subcellular location is the cytoplasm. The catalysed reaction is beta-D-fructose 1,6-bisphosphate + H2O = beta-D-fructose 6-phosphate + phosphate. The protein operates within carbohydrate biosynthesis; gluconeogenesis. The polypeptide is Fructose-1,6-bisphosphatase class 1 (Bordetella petrii (strain ATCC BAA-461 / DSM 12804 / CCUG 43448)).